Reading from the N-terminus, the 172-residue chain is Co-chaperone protein HscB homolog (172 aa).

The 73-residue stretch at 2 to 74 (NYFELFGLVE…LRRAEYLLSL (73 aa)) folds into the J domain.

It belongs to the HscB family. In terms of assembly, interacts with HscA and stimulates its ATPase activity.

Functionally, co-chaperone involved in the maturation of iron-sulfur cluster-containing proteins. Seems to help targeting proteins to be folded toward HscA. In Aeromonas hydrophila subsp. hydrophila (strain ATCC 7966 / DSM 30187 / BCRC 13018 / CCUG 14551 / JCM 1027 / KCTC 2358 / NCIMB 9240 / NCTC 8049), this protein is Co-chaperone protein HscB homolog.